Consider the following 89-residue polypeptide: Translation initiation factor IF-1, chloroplastic (89 aa).

Residues Met-1–Pro-73 enclose the S1-like domain.

It belongs to the IF-1 family. Component of the 30S ribosomal translation pre-initiation complex which assembles on the 30S ribosome in the order IF-2 and IF-3, IF-1 and N-formylmethionyl-tRNA(fMet); mRNA recruitment can occur at any time during PIC assembly.

The protein localises to the plastid. Its subcellular location is the chloroplast. Functionally, one of the essential components for the initiation of protein synthesis. Stabilizes the binding of IF-2 and IF-3 on the 30S subunit to which N-formylmethionyl-tRNA(fMet) subsequently binds. Helps modulate mRNA selection, yielding the 30S pre-initiation complex (PIC). Upon addition of the 50S ribosomal subunit IF-1, IF-2 and IF-3 are released leaving the mature 70S translation initiation complex. This Jasminum nudiflorum (Winter jasmine) protein is Translation initiation factor IF-1, chloroplastic.